We begin with the raw amino-acid sequence, 159 residues long: 2-C-methyl-D-erythritol 2,4-cyclodiphosphate synthase (159 aa).

Residues Asp-10 and His-12 each contribute to the a divalent metal cation site. 4-CDP-2-C-methyl-D-erythritol 2-phosphate-binding positions include 10 to 12 (DVH) and 36 to 37 (HS). His-44 contacts a divalent metal cation. 4-CDP-2-C-methyl-D-erythritol 2-phosphate is bound by residues 58–60 (DIG), 63–67 (FPDTD), 102–108 (AQAPRMA), 134–137 (TTSE), Phe-141, and Arg-144.

Belongs to the IspF family. In terms of assembly, homotrimer. It depends on a divalent metal cation as a cofactor.

It catalyses the reaction 4-CDP-2-C-methyl-D-erythritol 2-phosphate = 2-C-methyl-D-erythritol 2,4-cyclic diphosphate + CMP. It participates in isoprenoid biosynthesis; isopentenyl diphosphate biosynthesis via DXP pathway; isopentenyl diphosphate from 1-deoxy-D-xylulose 5-phosphate: step 4/6. Involved in the biosynthesis of isopentenyl diphosphate (IPP) and dimethylallyl diphosphate (DMAPP), two major building blocks of isoprenoid compounds. Catalyzes the conversion of 4-diphosphocytidyl-2-C-methyl-D-erythritol 2-phosphate (CDP-ME2P) to 2-C-methyl-D-erythritol 2,4-cyclodiphosphate (ME-CPP) with a corresponding release of cytidine 5-monophosphate (CMP). In Cellvibrio japonicus (strain Ueda107) (Pseudomonas fluorescens subsp. cellulosa), this protein is 2-C-methyl-D-erythritol 2,4-cyclodiphosphate synthase.